Consider the following 556-residue polypeptide: MSVSAFNRRWAAVILEALTRHGVRHICIAPGSRSTPLTLAAAENSAFIHHTHFDERGLGHLALGLAKVSKQPVAVIVTSGTAVANLYPALIEAGLTGEKLILLTADRPPELIDCGANQAIRQPGMFASHPTHSISLPRPTQDIPARWLVSTIDHALGTLHAGGVHINCPFAEPLYGEMDDTGISWQQRLGDWWQDDKPWLREAPHRESEKQRDWFFWRQKRGVVVAGRMSAEEGKKVALWAQTLGWPLIGDVLSQTGQPLPCADLWLGNAKATSELQQAQIVVQLGSSLTGKRLLQWQASCEPEEYWIVDDIEGRLDPAHHRGRRLIANIADWLELHPAEKRQPWCVEIPRLAEQAMQAVIARRDAFGEAQLAHRISDYLPEQGQLFVGNSLVVRLIDALSQLPAGYPVYSNRGASGIDGLLSTAAGVQRASGKPTLAIVGDLSALYDLNALALLRQVSAPLVLIVVNNNGGQIFSLLPTPKSERERFYLMPQNVHFEHAAAMFELKYHSPQNWQELETTLVDAWRTPTTTVIEMVVNDTDGAQTLQQLLAQVSHL.

This sequence belongs to the TPP enzyme family. MenD subfamily. In terms of assembly, homodimer. Mg(2+) is required as a cofactor. Requires Mn(2+) as cofactor. Thiamine diphosphate serves as cofactor.

It catalyses the reaction isochorismate + 2-oxoglutarate + H(+) = 5-enolpyruvoyl-6-hydroxy-2-succinyl-cyclohex-3-ene-1-carboxylate + CO2. It functions in the pathway quinol/quinone metabolism; 1,4-dihydroxy-2-naphthoate biosynthesis; 1,4-dihydroxy-2-naphthoate from chorismate: step 2/7. It participates in quinol/quinone metabolism; menaquinone biosynthesis. Catalyzes the thiamine diphosphate-dependent decarboxylation of 2-oxoglutarate and the subsequent addition of the resulting succinic semialdehyde-thiamine pyrophosphate anion to isochorismate to yield 2-succinyl-5-enolpyruvyl-6-hydroxy-3-cyclohexene-1-carboxylate (SEPHCHC). This Escherichia coli O127:H6 (strain E2348/69 / EPEC) protein is 2-succinyl-5-enolpyruvyl-6-hydroxy-3-cyclohexene-1-carboxylate synthase.